Consider the following 426-residue polypeptide: MTPLCLNCSVLPGDLYPGGARNPMACNGSAARGHFDPEDLNLTDEALRLKYLGPQQTELFMPICATYLLIFVVGAVGNGLTCLVILRHKAMRTPTNYYLFSLAVSDLLVLLVGLPLELYEMWHNYPFLLGVGGCYFRTLLFEMVCLASVLNVTALSVERYVAVVHPLQARSMVTRAHVRRVLGAVWGLAMLCSLPNTSLHGIRQLHVPCRGPVPDSAVCMLVRPRALYNMVVQTTALLFFCLPMAIMSVLYLLIGLRLRRERLLLMQEAKGRGSAAARSRYTCRLQQHDRGRRQVTKMLFVLVVVFGICWAPFHADRVMWSVVSQWTDGLHLAFQHVHVISGIFFYLGSAANPVLYSLMSSRFRETFQEALCLGACCHRLRPRHSSHSLSRMTTGSTLCDVGSLGSWVHPLAGNDGPEAQQETDPS.

At 1–65 (MTPLCLNCSV…QTELFMPICA (65 aa)) the chain is on the extracellular side. Asn-7, Asn-27, and Asn-41 each carry an N-linked (GlcNAc...) asparagine glycan. Residues 66–86 (TYLLIFVVGAVGNGLTCLVIL) form a helical membrane-spanning segment. Residues 87 to 97 (RHKAMRTPTNY) lie on the Cytoplasmic side of the membrane. A helical transmembrane segment spans residues 98–118 (YLFSLAVSDLLVLLVGLPLEL). Over 119–138 (YEMWHNYPFLLGVGGCYFRT) the chain is Extracellular. Residues Cys-134 and Cys-219 are joined by a disulfide bond. A helical transmembrane segment spans residues 139-161 (LLFEMVCLASVLNVTALSVERYV). Residues 162–181 (AVVHPLQARSMVTRAHVRRV) are Cytoplasmic-facing. A helical transmembrane segment spans residues 182–202 (LGAVWGLAMLCSLPNTSLHGI). At 203 to 235 (RQLHVPCRGPVPDSAVCMLVRPRALYNMVVQTT) the chain is on the extracellular side. Residues 236–256 (ALLFFCLPMAIMSVLYLLIGL) form a helical membrane-spanning segment. Residues 257–294 (RLRRERLLLMQEAKGRGSAAARSRYTCRLQQHDRGRRQ) lie on the Cytoplasmic side of the membrane. A helical transmembrane segment spans residues 295 to 315 (VTKMLFVLVVVFGICWAPFHA). Topologically, residues 316 to 338 (DRVMWSVVSQWTDGLHLAFQHVH) are extracellular. A helical transmembrane segment spans residues 339–359 (VISGIFFYLGSAANPVLYSLM). The Cytoplasmic portion of the chain corresponds to 360 to 426 (SSRFRETFQE…PEAQQETDPS (67 aa)).

Belongs to the G-protein coupled receptor 1 family. As to expression, expressed in greatest abundance in peripheral organs, particularly in elements of the gastrointestinal and urogenital systems with highest levels in testes. In central nervous system structures express levels are much lower than those seen in peripheral organs. Within the CNS, has been detected in highest abundance in the cerebellum, dorsal root ganglia, hippocampus, and spinal cord.

It localises to the cell membrane. Functionally, receptor for the neuromedin-U and neuromedin-S neuropeptides. The polypeptide is Neuromedin-U receptor 1 (NMUR1) (Homo sapiens (Human)).